We begin with the raw amino-acid sequence, 349 residues long: Homeobox protein engrailed (349 aa).

Disordered regions lie at residues 26-53 (DGPS…SPLS), 146-210 (GKET…PLPP), 228-252 (PSSG…EKRP), and 327-349 (STIP…ARIE). 2 stretches are compositionally biased toward basic and acidic residues: residues 173 to 188 (QMKK…RTES) and 242 to 252 (DKAITPDEKRP). The segment at residues 249–308 (EKRPRTAFTAEQLSRLKHEFNENRYLTERRRQDLARELGLHENQIKIWFQNNRAKLKKSS) is a DNA-binding region (homeobox).

This sequence belongs to the engrailed homeobox family.

The protein localises to the nucleus. The protein is Homeobox protein engrailed of Artemia franciscana (Brine shrimp).